A 149-amino-acid chain; its full sequence is UPF0260 protein PA1299 (149 aa).

This sequence belongs to the UPF0260 family.

The protein is UPF0260 protein PA1299 of Pseudomonas aeruginosa (strain ATCC 15692 / DSM 22644 / CIP 104116 / JCM 14847 / LMG 12228 / 1C / PRS 101 / PAO1).